Reading from the N-terminus, the 743-residue chain is Alpha-N-acetylglucosaminidase (743 aa).

The first 23 residues, 1 to 23, serve as a signal peptide directing secretion; it reads MEAVAVAAAVGVLLLAGAGGAAG. N-linked (GlcNAc...) asparagine glycosylation is found at Asn261, Asn272, Asn435, Asn503, Asn526, and Asn532.

The protein belongs to the glycosyl hydrolase 89 family. As to quaternary structure, monomer and homodimer. In terms of tissue distribution, liver, ovary, peripheral blood leukocytes, testis, prostate, spleen, colon, lung, placenta and kidney.

Its subcellular location is the lysosome. The enzyme catalyses Hydrolysis of terminal non-reducing N-acetyl-D-glucosamine residues in N-acetyl-alpha-D-glucosaminides.. Involved in the degradation of heparan sulfate. In Homo sapiens (Human), this protein is Alpha-N-acetylglucosaminidase (NAGLU).